Consider the following 567-residue polypeptide: SRSF protein kinase 3 (567 aa).

Residues 1–16 (MSASTGGGGDSGGSGG) show a composition bias toward gly residues. Residues 1-36 (MSASTGGGGDSGGSGGSSSSSQASCGPESSGSELAL) form a disordered region. Residues 17 to 32 (SSSSSQASCGPESSGS) are compositionally biased toward low complexity. Residue S50 is modified to Phosphoserine. Residues 79–565 (YHVVRKLGWG…AADCLQHPWL (487 aa)) form the Protein kinase domain. ATP-binding positions include 85–93 (LGWGHFSTV) and K108. D212 serves as the catalytic Proton acceptor. Disordered stretches follow at residues 238–283 (QQAG…RLLE) and 298–351 (ATQA…SQTS). The segment covering 248 to 258 (SIVSTAPQEVL) has biased composition (polar residues). Positions 264-279 (SKNKRKKMRRKRKQQK) are enriched in basic residues. A compositionally biased stretch (low complexity) spans 327–348 (AGPSPASSSPAPGGGRSLSAGS). At S330 the chain carries Phosphoserine.

It belongs to the protein kinase superfamily. CMGC Ser/Thr protein kinase family. In terms of tissue distribution, expressed in skeletal and heart muscle. Also expressed in the fetal brain.

It localises to the nucleus. The protein resides in the cytoplasm. It catalyses the reaction L-seryl-[protein] + ATP = O-phospho-L-seryl-[protein] + ADP + H(+). It carries out the reaction L-threonyl-[protein] + ATP = O-phospho-L-threonyl-[protein] + ADP + H(+). In terms of biological role, serine/arginine-rich protein-specific kinase which specifically phosphorylates its substrates at serine residues located in regions rich in arginine/serine dipeptides, known as RS domains. Phosphorylates the SR splicing factor SRSF1 and the lamin-B receptor (LBR) in vitro. Required for normal muscle development. This is SRSF protein kinase 3 (SRPK3) from Homo sapiens (Human).